A 75-amino-acid polypeptide reads, in one-letter code: Sec-independent protein translocase protein TatA (75 aa).

The helical transmembrane segment at 1–21 (MGSFSIWHWLVVLAIVLLVFG) threads the bilayer. A disordered region spans residues 40-75 (KKGMRDEDKPNAQLGDESRSQDASRTAQDEHDRTPR).

This sequence belongs to the TatA/E family. In terms of assembly, the Tat system comprises two distinct complexes: a TatABC complex, containing multiple copies of TatA, TatB and TatC subunits, and a separate TatA complex, containing only TatA subunits. Substrates initially bind to the TatABC complex, which probably triggers association of the separate TatA complex to form the active translocon.

It localises to the cell inner membrane. Part of the twin-arginine translocation (Tat) system that transports large folded proteins containing a characteristic twin-arginine motif in their signal peptide across membranes. TatA could form the protein-conducting channel of the Tat system. The sequence is that of Sec-independent protein translocase protein TatA from Stenotrophomonas maltophilia (strain R551-3).